A 438-amino-acid polypeptide reads, in one-letter code: Xylose isomerase (438 aa).

Catalysis depends on residues H100 and D103. The Mg(2+) site is built by E231, E267, H270, D295, D306, D308, and D338.

It belongs to the xylose isomerase family. In terms of assembly, homotetramer. Requires Mg(2+) as cofactor.

The protein localises to the cytoplasm. The enzyme catalyses alpha-D-xylose = alpha-D-xylulofuranose. This Pseudomonas syringae pv. syringae (strain B728a) protein is Xylose isomerase.